The sequence spans 242 residues: UPF0173 metal-dependent hydrolase Rxyl_1261 (242 aa).

The protein belongs to the UPF0173 family.

The polypeptide is UPF0173 metal-dependent hydrolase Rxyl_1261 (Rubrobacter xylanophilus (strain DSM 9941 / JCM 11954 / NBRC 16129 / PRD-1)).